The primary structure comprises 821 residues: DNA replication licensing factor MCM6 (821 aa).

Residue Met1 is modified to N-acetylmethionine. Ser13, Ser219, and Ser271 each carry phosphoserine. The residue at position 278 (Thr278) is a Phosphothreonine. The 208-residue stretch at 346–553 (LYHNLCTSLF…TDYAIARRIV (208 aa)) folds into the MCM domain. The ATP site is built by His359, Ser399, Thr400, Ala401, Lys402, Ser403, and Asn504. The short motif at 528–531 (SRFD) is the Arginine finger element. The ADP site is built by Arg619 and Glu622. Lys643 is subject to N6-acetyllysine. The disordered stretch occupies residues 676–706 (VDEGPDGINGHADSPAPASGINGHSEDMNQD). 2 positions are modified to phosphoserine: Ser689 and Ser762. The residue at position 791 (Thr791) is a Phosphothreonine.

The protein belongs to the MCM family. As to quaternary structure, component of the MCM2-7 complex. The complex forms a toroidal hexameric ring with the proposed subunit order MCM2-MCM6-MCM4-MCM7-MCM3-MCM5. Component of the CMG helicase complex, a hexameric ring of related MCM2-7 subunits stabilized by CDC45 and the tetrameric GINS complex. May interact with MCM10. Interacts with TIPIN. Interacts with CDT1. Interacts with MCMBP. Interacts with DDI2. In terms of processing, O-glycosylated (O-GlcNAcylated), in a cell cycle-dependent manner.

The protein resides in the nucleus. It is found in the chromosome. The catalysed reaction is ATP + H2O = ADP + phosphate + H(+). In terms of biological role, acts as a component of the MCM2-7 complex (MCM complex) which is the replicative helicase essential for 'once per cell cycle' DNA replication initiation and elongation in eukaryotic cells. Core component of CDC45-MCM-GINS (CMG) helicase, the molecular machine that unwinds template DNA during replication, and around which the replisome is built. The active ATPase sites in the MCM2-7 ring are formed through the interaction surfaces of two neighboring subunits such that a critical structure of a conserved arginine finger motif is provided in trans relative to the ATP-binding site of the Walker A box of the adjacent subunit. The six ATPase active sites, however, are likely to contribute differentially to the complex helicase activity. The polypeptide is DNA replication licensing factor MCM6 (MCM6) (Bos taurus (Bovine)).